The primary structure comprises 473 residues: Ribulose bisphosphate carboxylase large chain (473 aa).

The necessary and sufficient to target proteins to carboxysomes, interacts with shell proteins stretch occupies residues 1–136 (MAVKKYSAGV…RLEDVRFPLA (136 aa)). Substrate-binding residues include Asn116 and Thr166. Lys168 (proton acceptor) is an active-site residue. Residue Lys170 participates in substrate binding. Residues Lys194, Asp196, and Glu197 each contribute to the Mg(2+) site. Lys194 is modified (N6-carboxylysine). His287 acts as the Proton acceptor in catalysis. Substrate contacts are provided by Arg288, His320, and Ser372.

The protein belongs to the RuBisCO large chain family. Type I subfamily. Heterohexadecamer of 8 large chains and 8 small chains. Forms a CsoS2-CsoS1-RuBisCO complex. The N-terminus (residues 1-136) interacts with shell proteins CsoS1A, CsoS1B and CsoS1C. Holo-RuBisCO interacts with the N-terminal repeats of CsoS2; binding is sensitive to ionic strength. A fusion of a single N-terminal repeat to the C-terminus of the large subunit of RuBisCO (cbbL) shows the repeat can lie between a CbbL dimer, making minor contacts to CbbS; thus each RuBisCO holoenzyme could bind 8 repeats. Requires Mg(2+) as cofactor.

It localises to the carboxysome. It carries out the reaction 2 (2R)-3-phosphoglycerate + 2 H(+) = D-ribulose 1,5-bisphosphate + CO2 + H2O. The enzyme catalyses D-ribulose 1,5-bisphosphate + O2 = 2-phosphoglycolate + (2R)-3-phosphoglycerate + 2 H(+). Its function is as follows. RuBisCO catalyzes two reactions: the carboxylation of D-ribulose 1,5-bisphosphate, the primary event in carbon dioxide fixation, as well as the oxidative fragmentation of the pentose substrate. Both reactions occur simultaneously and in competition at the same active site. There are estimated to be 270 RuBisCO heterohexadecamers per carboxysome. Functionally, alpha-carboxysomes are able to assemble in the absence of RuBisCO, unlike beta-carboxysomes. The RuBisCO large subunit is required for enzyme integration into carboxysomes; replacing it with the carboxysomally targeted gene (Tcr_0838, AC Q31HD9) of H.crungenus places RuBisCO in the carboxysome, while the non-carboxysomal large subunit of H.crungenus (Tcr_0427, AC Q31IK0) is not incorporated in the carboxysome. The sequence is that of Ribulose bisphosphate carboxylase large chain from Halothiobacillus neapolitanus (strain ATCC 23641 / c2) (Thiobacillus neapolitanus).